A 256-amino-acid chain; its full sequence is Photosystem I chlorophyll a/b-binding protein 5, chloroplastic (256 aa).

Residues 1-32 (MAVVLRGGITGGFLHHRRDASSVITRRISSVK) constitute a chloroplast transit peptide. Ala33 carries the N-acetylalanine modification. Trp49 is a chlorophyll b binding site. Chlorophyll a contacts are provided by Phe69 and Glu88. Arg93 provides a ligand contact to chlorophyll b. The next 2 helical transmembrane spans lie at 94-113 (FAMLGVAGILFTDLLRTTGI) and 129-146 (FASTKTLIVVQFLLMGFA). Chlorophyll b-binding residues include Glu147 and Arg150. Residues Lys205, Glu206, Asn209, Arg211, Gln223, and His238 each coordinate chlorophyll a. The helical transmembrane segment at 212-232 (LAMMAMLGFFVQASVTHTGPI) threads the bilayer.

This sequence belongs to the light-harvesting chlorophyll a/b-binding (LHC) protein family. The LHC complex consists of chlorophyll a-b binding proteins. Homodimer. Heterodimer with LHCA2 and, possibly, LHCA3. Can substitute to LHCA4 to form a complex with LHCA1. Binds pigments. Element of the NAD(P)H dehydrogenase-photosystem I supercomplex (NDH-PSI). Binds at least 14 chlorophylls (8 Chl-a and 6 Chl-b) and carotenoids such as lutein and neoxanthin. serves as cofactor. In terms of processing, photoregulated by reversible phosphorylation of its threonine residues.

The protein resides in the plastid. Its subcellular location is the chloroplast thylakoid membrane. Its function is as follows. The light-harvesting complex (LHC) functions as a light receptor, it captures and delivers excitation energy to photosystems with which it is closely associated. Seems involved in the function of the photosystem I in low light conditions, when other LHCA proteins are less abundant. Required, together with LHCA6, for the formation of a full-size NAD(P)H dehydrogenase-photosystem I supercomplex (NDH-PSI) that triggers cyclic and chlororespiratory electron transport in chloroplast thylakoids, especially under stress conditions (e.g. increased light intensity). This Arabidopsis thaliana (Mouse-ear cress) protein is Photosystem I chlorophyll a/b-binding protein 5, chloroplastic.